Consider the following 256-residue polypeptide: Phosphatidylglycerol--prolipoprotein diacylglyceryl transferase 2 (256 aa).

Helical transmembrane passes span 11-31 (LKIYSYGFMIGLGIICATLLF), 46-66 (FNATILTVISGILGGKILYII), and 83-103 (FGNGFVIYGAIIGGALGIALC). Position 130 (arginine 130) interacts with a 1,2-diacyl-sn-glycero-3-phospho-(1'-sn-glycerol). A run of 3 helical transmembrane segments spans residues 142 to 162 (AETTSSIGIIFPADSLAPAGV), 164 to 184 (LYPTQIFSSIFDFALGLFLLW), and 221 to 241 (VGLLSTSQFISIFILIGGILL).

The protein belongs to the Lgt family.

The protein localises to the cell membrane. It catalyses the reaction L-cysteinyl-[prolipoprotein] + a 1,2-diacyl-sn-glycero-3-phospho-(1'-sn-glycerol) = an S-1,2-diacyl-sn-glyceryl-L-cysteinyl-[prolipoprotein] + sn-glycerol 1-phosphate + H(+). Its pathway is protein modification; lipoprotein biosynthesis (diacylglyceryl transfer). Its function is as follows. Catalyzes the transfer of the diacylglyceryl group from phosphatidylglycerol to the sulfhydryl group of the N-terminal cysteine of a prolipoprotein, the first step in the formation of mature lipoproteins. This chain is Phosphatidylglycerol--prolipoprotein diacylglyceryl transferase 2, found in Clostridium perfringens (strain 13 / Type A).